A 358-amino-acid chain; its full sequence is MSVAPLKNDVFLRALLREPVPYTPIWLMRQAGRYLPEYNATRARAGSFMGLAQNPDYACEVTLQPLARYPLDAAILFSDILTVPHAMGLGLDFAPGEGPRFAHPVRDESDVAKLAVPDMDSLRYVFDAVRTIRRELDGRVPLIGFAGSPWTIACYMAEGRGSDDYRLIKSMLYGRPDLLHRILEINAEATRHYLNAQIDAGAQAVMLFDSWGGVLADGLFQQFSLAYTRRVVEGLTREREGRRVPVIVFTKGGGQWLEEIAACGCDAVGLDWTVNLGAARRRVTDAVALQGNLDPMTLFGGAQAVRAEARRTLDAFGPVGKGGHVFNLGHGISQYSPPEVVSELVDEVHTYSRALHAG.

Residues 29–33 (RQAGR), Phe48, Asp79, Tyr155, Ser210, and His330 each bind substrate.

Belongs to the uroporphyrinogen decarboxylase family. In terms of assembly, homodimer.

The protein resides in the cytoplasm. It carries out the reaction uroporphyrinogen III + 4 H(+) = coproporphyrinogen III + 4 CO2. It participates in porphyrin-containing compound metabolism; protoporphyrin-IX biosynthesis; coproporphyrinogen-III from 5-aminolevulinate: step 4/4. In terms of biological role, catalyzes the decarboxylation of four acetate groups of uroporphyrinogen-III to yield coproporphyrinogen-III. This chain is Uroporphyrinogen decarboxylase, found in Bordetella pertussis (strain Tohama I / ATCC BAA-589 / NCTC 13251).